The chain runs to 150 residues: D-galactose-binding lectin (150 aa).

Histidine 16 and glycine 19 together coordinate D-galactose. Asparagine 26 carries an N-linked (GlcNAc...) asparagine glycan. Residues 35–37 (DIH), histidine 64, and glycine 67 each bind D-galactose. N-linked (GlcNAc...) asparagine glycosylation is present at asparagine 74. D-galactose contacts are provided by residues 83–85 (DRH), histidine 108, and glycine 111. The N-linked (GlcNAc...) asparagine glycan is linked to asparagine 118. A D-galactose-binding site is contributed by 127–129 (DEH).

Oligomerizes in solution. Post-translationally, the N-terminus is blocked. As to expression, expressed in mantle. Expressed 51 and 1.6 fold in mantle and gonads, respectively, relative to that in hemocytes. Expressed at a much lower level in other tissues tested including gill, muscle and hepatopancreas.

Its activity is regulated as follows. Hemagglutinating activity does not require Ca(2+) ions. Hemagglutinating activity is inhibited by porcine stomach mucin (PSM), bovine submaxillary mucin (BSM) and fetuin. Agglutination of V.proteolyticus bacteria is inhibited by D-galactose, but not by D-glucose. Fungal binding is inhibited by D-galactose, but not by pathogen-associated molecular patterns (PAMPs) including lipopolysaccharide (LPS), peptidoglycan and beta-glucan. Functionally, D-galactose-binding lectin. Binds both alpha and beta anomer of galactose (Gal). Binds strongly to branched beta-Gal-terminated glycans and weakly to unbranched glycans with alpha-Gal on the end of chains. Has strong affinity for both Gal and GalNAc. Binds glycoproteins containing mucin-type chains. Has hemagglutinating activity towards human group A erythrocytes. Has hemagglutinating activity towards rabbit erythrocytes. Agglutinates V.proteolyticus bacteria. Binds strongly to fungi including species from genera Aspergillus, Alternaria, Fusarium and Haematonectria, and to a lesser extent to fungi from genera Trichoderma. Decreases conidia germination and hyphal growth of fungi. At high concentration, stimulates secretion of cytokines TNF-alpha and IFN-gamma from human peripheral blood cells, and at low concentration reduces hyperexpression of cytokine IL-10 in these cells, indicative of immunomodulatory capability. However, has no effect on IL-4 production. Recognizes pathogen-associated molecular patterns (PAMPs) and binds to peptidoglycan from S.aureus, but has only little binding to beta-1,3-glucan from E.gracilis and lipopolysaccharide (LPS) from E.coli. May be involved in innate immunity acting as an antibacterial or antifungal agent recognizing carbohydrate ligands on the surface of pathogens. This Mytilus trossulus (Blue mussel) protein is D-galactose-binding lectin.